A 326-amino-acid chain; its full sequence is DNA-directed RNA polymerase subunit alpha (326 aa).

Positions 1–232 are alpha N-terminal domain (alpha-NTD); the sequence is MQGSARNFLK…EQLSSFVELE (232 aa). The alpha C-terminal domain (alpha-CTD) stretch occupies residues 246–326; that stretch reads FDPQLLAAVD…NWPPVDLMSE (81 aa).

It belongs to the RNA polymerase alpha chain family. Homodimer. The RNAP catalytic core consists of 2 alpha, 1 beta, 1 beta' and 1 omega subunit. When a sigma factor is associated with the core the holoenzyme is formed, which can initiate transcription.

It carries out the reaction RNA(n) + a ribonucleoside 5'-triphosphate = RNA(n+1) + diphosphate. Its function is as follows. DNA-dependent RNA polymerase catalyzes the transcription of DNA into RNA using the four ribonucleoside triphosphates as substrates. This chain is DNA-directed RNA polymerase subunit alpha, found in Ruthia magnifica subsp. Calyptogena magnifica.